The primary structure comprises 183 residues: MDKYTSRYHKFYDEVVVPKLMKELEIKNIMECPKLEKIIVNMGVGEATQNSKLIDAAMADLTIITGQKPLLRKAKKSEAGFKLREGMPIGAKVTLRKERMYDFLDRLVNVVLPRVRDFEGVPSNSFDGRGNYSVGLRDQLVFPEIDFDKVEKLLGMSITMVSSAKTDEEGRALLKAFGMPFKK.

It belongs to the universal ribosomal protein uL5 family. Part of the 50S ribosomal subunit; part of the 5S rRNA/L5/L18/L25 subcomplex. Contacts the 5S rRNA and the P site tRNA. Forms a bridge to the 30S subunit in the 70S ribosome.

This is one of the proteins that bind and probably mediate the attachment of the 5S RNA into the large ribosomal subunit, where it forms part of the central protuberance. In the 70S ribosome it contacts protein S13 of the 30S subunit (bridge B1b), connecting the 2 subunits; this bridge is implicated in subunit movement. Contacts the P site tRNA; the 5S rRNA and some of its associated proteins might help stabilize positioning of ribosome-bound tRNAs. The chain is Large ribosomal subunit protein uL5 from Fusobacterium nucleatum subsp. nucleatum (strain ATCC 25586 / DSM 15643 / BCRC 10681 / CIP 101130 / JCM 8532 / KCTC 2640 / LMG 13131 / VPI 4355).